The following is a 484-amino-acid chain: MDYFKTSIDQLHEQLRSGKVTSSQLVDETLAGINQLDAEVDAFLALNADGAKEKAAAVDAAGIADDQPLAGVPIAIKDNIVTKGVVTTAASKILANFNPIYDATVIQKLDAAGAINVGKTNMDEFAMGSSTENSAFKTTKNAWDHTRVPGGSSGGSAAAVAAGEVIAALGSDTGGSIRQPAAFNGIVGVKPTYGRVSRWGLIAFSSSLDQIGTLTRHVKDAAQLLNVIAGHDERDSTTADTPVPDFTAKIGQDIKGMKIALPKEYLGKGVDPAVADKIKAAAKQFEDMGATVTEVSLPHTQYAVPSYYIIASSEASSNLQRFDGIRYGFRAKDVKNIEDVYVRSRSEGFGPEVKRRIMLGTFSLSAGFYDAYFKKAGQVRTLITRDFEDVFKDYDLIIGPTTPTVAFKIGEKVTDPVTMYMNDILTIPVNLAGLPAASVPAGFVDGMPVGLQLIGKHFDESTIFQVAAAFEAQNDYLAQIPGGK.

Catalysis depends on charge relay system residues Lys77 and Ser152. Ser176 functions as the Acyl-ester intermediate in the catalytic mechanism.

Belongs to the amidase family. GatA subfamily. In terms of assembly, heterotrimer of A, B and C subunits.

It carries out the reaction L-glutamyl-tRNA(Gln) + L-glutamine + ATP + H2O = L-glutaminyl-tRNA(Gln) + L-glutamate + ADP + phosphate + H(+). Functionally, allows the formation of correctly charged Gln-tRNA(Gln) through the transamidation of misacylated Glu-tRNA(Gln) in organisms which lack glutaminyl-tRNA synthetase. The reaction takes place in the presence of glutamine and ATP through an activated gamma-phospho-Glu-tRNA(Gln). This is Glutamyl-tRNA(Gln) amidotransferase subunit A from Lacticaseibacillus paracasei (strain ATCC 334 / BCRC 17002 / CCUG 31169 / CIP 107868 / KCTC 3260 / NRRL B-441) (Lactobacillus paracasei).